The primary structure comprises 457 residues: MAPAQNPISSQHVVVIGAGAAGLVAARELSREGHTVVVLEREKEVGGLWIYSPKAESDPLSLDPTRSIVHSSVYESLRTNLPRECMGFTDFPFVPRFDDESRDSRRYPSHMEVLAYLQDFAREFNLEEMVRFEIEVVRVEPVNGKWRVWSKTSGGVSHDEIFDAVVVCSGHYTEPNVAHIPGIKSWPGKQIHSHNYRVPGPFENEVVVVIGNFASGADISRDIAKVAKEVHIASRASEFDTYEKLPVPRNNLWIHSEIDTAYEDGSIVFKNGKVVYADSIVYCTGYKYRFTFLETNGYMNIDENRVEHLYKHVFPPALSPGLSFVGLPSMGIQFVMFEIQSKWVAAVLSRRVTLPTEDKMMEDISAWYASLDAVGIPKRYTHKLGKIQSEYLNWVAEECGCPLVEHWRNQQIVRGYQRLVSHPETYRDEWDDNDLMEEAYEDFARKKLISFHPSHIL.

17–22 (GAGAAG) is an FAD binding site. 211-216 (GNFASG) contacts NADP(+).

This sequence belongs to the FMO family.

It catalyses the reaction a (Z)-omega-(methylsulfanyl)-N-sulfo-alkylhydroximate S-glucoside + NADPH + O2 + H(+) = a (Z)-omega-(methylsulfinyl)-alkyl-glucosinolate + NADP(+) + H2O. Functionally, catalyzes the conversion of methylthioalkyl glucosinolates of any chain length into methylsulfinylalkyl glucosinolates. This chain is Flavin-containing monooxygenase FMO GS-OX2 (FMOGS-OX2), found in Arabidopsis thaliana (Mouse-ear cress).